We begin with the raw amino-acid sequence, 360 residues long: Histidinol-phosphate aminotransferase (360 aa).

The residue at position 222 (Lys-222) is an N6-(pyridoxal phosphate)lysine.

It belongs to the class-II pyridoxal-phosphate-dependent aminotransferase family. Histidinol-phosphate aminotransferase subfamily. Homodimer. Pyridoxal 5'-phosphate serves as cofactor.

It carries out the reaction L-histidinol phosphate + 2-oxoglutarate = 3-(imidazol-4-yl)-2-oxopropyl phosphate + L-glutamate. It functions in the pathway amino-acid biosynthesis; L-histidine biosynthesis; L-histidine from 5-phospho-alpha-D-ribose 1-diphosphate: step 7/9. The protein is Histidinol-phosphate aminotransferase of Listeria monocytogenes serotype 4b (strain F2365).